A 325-amino-acid chain; its full sequence is Biotin synthase (325 aa).

The Radical SAM core domain maps to 36–254; that stretch reads NEVQLAMLLS…IALARIMFPK (219 aa). The [4Fe-4S] cluster site is built by Cys-51, Cys-55, and Cys-58. [2Fe-2S] cluster is bound by residues Cys-95, Cys-126, Cys-186, and Arg-258.

Belongs to the radical SAM superfamily. Biotin synthase family. In terms of assembly, homodimer. [4Fe-4S] cluster is required as a cofactor. The cofactor is [2Fe-2S] cluster.

It carries out the reaction (4R,5S)-dethiobiotin + (sulfur carrier)-SH + 2 reduced [2Fe-2S]-[ferredoxin] + 2 S-adenosyl-L-methionine = (sulfur carrier)-H + biotin + 2 5'-deoxyadenosine + 2 L-methionine + 2 oxidized [2Fe-2S]-[ferredoxin]. Its pathway is cofactor biosynthesis; biotin biosynthesis; biotin from 7,8-diaminononanoate: step 2/2. Its function is as follows. Catalyzes the conversion of dethiobiotin (DTB) to biotin by the insertion of a sulfur atom into dethiobiotin via a radical-based mechanism. This is Biotin synthase from Neorickettsia sennetsu (strain ATCC VR-367 / Miyayama) (Ehrlichia sennetsu).